Here is a 318-residue protein sequence, read N- to C-terminus: Biotin synthase (318 aa).

Residues Asp-46 to Arg-272 enclose the Radical SAM core domain. Residues Cys-61, Cys-65, and Cys-68 each contribute to the [4Fe-4S] cluster site. Cys-105, Cys-138, Cys-197, and Lys-267 together coordinate [2Fe-2S] cluster.

The protein belongs to the radical SAM superfamily. Biotin synthase family. In terms of assembly, homodimer. [4Fe-4S] cluster is required as a cofactor. It depends on [2Fe-2S] cluster as a cofactor.

The catalysed reaction is (4R,5S)-dethiobiotin + (sulfur carrier)-SH + 2 reduced [2Fe-2S]-[ferredoxin] + 2 S-adenosyl-L-methionine = (sulfur carrier)-H + biotin + 2 5'-deoxyadenosine + 2 L-methionine + 2 oxidized [2Fe-2S]-[ferredoxin]. It participates in cofactor biosynthesis; biotin biosynthesis; biotin from 7,8-diaminononanoate: step 2/2. Functionally, catalyzes the conversion of dethiobiotin (DTB) to biotin by the insertion of a sulfur atom into dethiobiotin via a radical-based mechanism. The chain is Biotin synthase from Cenarchaeum symbiosum (strain A).